The chain runs to 122 residues: 5'-AMP-activated protein kinase subunit beta-1 (122 aa).

Residues Ser-5, Ser-61, Ser-66, and Ser-73 each carry the phosphoserine modification. The segment at 33–122 is glycogen-binding domain; sequence EVNDKASAQA…TVNNIIQVKK (90 aa). Thr-113 carries the phosphothreonine modification.

It belongs to the 5'-AMP-activated protein kinase beta subunit family. As to quaternary structure, AMPK is a heterotrimer of an alpha catalytic subunit (PRKAA1 or PRKAA2), a beta (PRKAB1 or PRKAB2) and a gamma non-catalytic subunits (PRKAG1, PRKAG2 or PRKAG3). Interacts with FNIP1 and FNIP2. Phosphorylated when associated with the catalytic subunit (PRKAA1 or PRKAA2). Phosphorylated by ULK1; leading to negatively regulate AMPK activity and suggesting the existence of a regulatory feedback loop between ULK1 and AMPK.

In terms of biological role, non-catalytic subunit of AMP-activated protein kinase (AMPK), an energy sensor protein kinase that plays a key role in regulating cellular energy metabolism. In response to reduction of intracellular ATP levels, AMPK activates energy-producing pathways and inhibits energy-consuming processes: inhibits protein, carbohydrate and lipid biosynthesis, as well as cell growth and proliferation. AMPK acts via direct phosphorylation of metabolic enzymes, and by longer-term effects via phosphorylation of transcription regulators. Also acts as a regulator of cellular polarity by remodeling the actin cytoskeleton; probably by indirectly activating myosin. Beta non-catalytic subunit acts as a scaffold on which the AMPK complex assembles, via its C-terminus that bridges alpha (PRKAA1 or PRKAA2) and gamma subunits (PRKAG1, PRKAG2 or PRKAG3). The polypeptide is 5'-AMP-activated protein kinase subunit beta-1 (PRKAB1) (Sus scrofa (Pig)).